We begin with the raw amino-acid sequence, 211 residues long: B3 domain-containing protein At5g42700 (211 aa).

A DNA-binding region (TF-B3) is located at residues 110 to 201 (FVKSMLQSHV…AFKVYITRVG (92 aa)).

The protein resides in the nucleus. The chain is B3 domain-containing protein At5g42700 from Arabidopsis thaliana (Mouse-ear cress).